The following is a 203-amino-acid chain: Recombination protein RecR (203 aa).

The segment at 56–71 (CAVCGNVSDDERCRIC) adopts a C4-type zinc-finger fold. The region spanning 79-179 (ALVCVVEEPK…TVTRIASGLP (101 aa)) is the Toprim domain.

The protein belongs to the RecR family.

May play a role in DNA repair. It seems to be involved in an RecBC-independent recombinational process of DNA repair. It may act with RecF and RecO. This is Recombination protein RecR from Mycobacterium ulcerans (strain Agy99).